Consider the following 358-residue polypeptide: L-tryptophan methyltransferase trpM (358 aa).

This sequence belongs to the methyltransferase superfamily.

The enzyme catalyses L-tryptophan + S-adenosyl-L-methionine = N(alpha)-methyl-L-tryptophan + S-adenosyl-L-homocysteine + H(+). It catalyses the reaction N(alpha)-methyl-L-tryptophan + S-adenosyl-L-methionine = N(alpha),N(alpha)-dimethyl-L-tryptophan + S-adenosyl-L-homocysteine + H(+). The catalysed reaction is N(alpha),N(alpha)-dimethyl-L-tryptophan + S-adenosyl-L-methionine = N(alpha),N(alpha),N(alpha)-trimethyl-L-tryptophan + S-adenosyl-L-homocysteine + H(+). In terms of biological role, methyltransferase that catalyzes iterative L-tryptophan N-methylations to produce L-abrine (N-alpha-methyl-L-tryptophan) and N,N-alpha-dimethyl-L-tryptophan. Also catalyzes a third methylation to yield L-hypaphorine (N,N,N-alpha-trimethyl-L-tryptopan), an agonist of the phytohormone indole-3-acetic acid. Can also N-methylate the non-native amino acid substrate 4-hydroxytryptophan, but the ability to incorporate trpM into a functional psilocybin biosynthesis pathway is indeed thwarted by the inability of the L-tryptophan decarboxylase psiD to use N,N-dimethyl-4-hydroxytryptophan as substrate. This is L-tryptophan methyltransferase trpM from Psilocybe serbica.